The following is a 310-amino-acid chain: Ribosomal RNA large subunit methyltransferase F (310 aa).

The protein belongs to the methyltransferase superfamily. METTL16/RlmF family.

Its subcellular location is the cytoplasm. It carries out the reaction adenosine(1618) in 23S rRNA + S-adenosyl-L-methionine = N(6)-methyladenosine(1618) in 23S rRNA + S-adenosyl-L-homocysteine + H(+). In terms of biological role, specifically methylates the adenine in position 1618 of 23S rRNA. The sequence is that of Ribosomal RNA large subunit methyltransferase F from Pseudoalteromonas translucida (strain TAC 125).